The sequence spans 99 residues: Integration host factor subunit alpha (99 aa).

It belongs to the bacterial histone-like protein family. In terms of assembly, heterodimer of an alpha and a beta chain.

In terms of biological role, this protein is one of the two subunits of integration host factor, a specific DNA-binding protein that functions in genetic recombination as well as in transcriptional and translational control. This Pseudoalteromonas translucida (strain TAC 125) protein is Integration host factor subunit alpha.